The primary structure comprises 59 residues: Large ribosomal subunit protein bL33 (59 aa).

It belongs to the bacterial ribosomal protein bL33 family.

This Neorickettsia sennetsu (strain ATCC VR-367 / Miyayama) (Ehrlichia sennetsu) protein is Large ribosomal subunit protein bL33.